The primary structure comprises 638 residues: MEPSALSPSGATLPLPLSLAPPPLPLPAAAVVHVSFPEVTSALLESLNQQRLQGQLCDVSIRVQGREFRAHRAVLAASSPYFHDQVLLKGMTSISLPSVMDPGAFETVLASAYTGRLSMAAADIVNFLTVGSVLQMWHIVDKCTELLREGRSAATTTTVTTAAAPSVSVPCASVPSGNGGTVAPATVGSVRSHTSSRASENQSPSSSNYFSPRESTDFSSTSQDAFVASAAGSGNRRDGGPVFPAPVVGSAGTTSGKLLLEADELCDDGGDGRGAVAPGAGLRRSNCMPASAVPQKHWVYVKQARNCPAPASLVHQDPDLEDEEEEEDLVLTCEDDEDEEMGGGSGVPAGGEPEATLSISDVRTLTEPADKGEEQVNFCESSNDFGPYEGGGAGAGLDDPGGPTPSSYALTHPPRPLLPLDVPGNQILVFPSSSSQAPGQPPGNTAEHGAVTLGGTSAVGLGIPSGSGGAPGGTGNSDGNKIFLCHCGKAFSHKSMRDRHVNMHLNLRPFDCPVCNKKFKMKHHLTEHMKTHTGLKPYECSVCAKKFMWRDSFMRHRGHCERRHRMGVGGVGSGPGPGPGPGTPSGPALQPKRESSTVGGGSGDEANSATPPSHRRVWSPPSVHKVEMDFSGGGGAAH.

Positions Cys-57–Ala-121 constitute a BTB domain. Disordered stretches follow at residues Cys-171 to Gln-223, Ser-229 to Val-248, Asp-335 to Glu-354, and Glu-367 to Val-451. The segment covering Ser-189–Phe-210 has biased composition (polar residues). Ser-203 is subject to Phosphoserine. The C2H2-type 1; atypical zinc-finger motif lies at Phe-483 to His-504. 2 C2H2-type zinc fingers span residues Phe-510–His-532 and Tyr-538–His-559. A disordered region spans residues His-564–His-638.

The protein belongs to the krueppel C2H2-type zinc-finger protein family.

The protein localises to the nucleus. Its function is as follows. May be involved in transcriptional regulation. In Mus musculus (Mouse), this protein is Zinc finger and BTB domain-containing protein 22 (Zbtb22).